The chain runs to 284 residues: Homeobox-leucine zipper protein HAT4 (284 aa).

Residues 48–59 are compositionally biased toward polar residues; that stretch reads ESFTSSVPNSDS. The tract at residues 48-132 is disordered; the sequence is ESFTSSVPNS…DGDNSRKKLR (85 aa). Low complexity predominate over residues 89 to 100; the sequence is VSSPNSTVSSST. The segment at residues 126–185 is a DNA-binding region (homeobox); it reads NSRKKLRLSKDQSAILEETFKDHSTLNPKQKQALAKQLGLRARQVEVWFQNRRARTKLKQ. A leucine-zipper region spans residues 193-214; that stretch reads LRRCCENLTEENRRLQKEVTEL.

This sequence belongs to the HD-ZIP homeobox family. Class II subfamily. Interacts with DNA as homodimer. Predominantly expressed in leaves and stems.

Its subcellular location is the nucleus. Probable transcription factor involved in the negative regulation of cell elongation and specific cell proliferation processes such as lateral root formation and secondary growth of the vascular system. Acts as a mediator of the red/far-red light effects on leaf cell expansion in the shading response. Binds to the DNA sequence 5'-CAAT[GC]ATTG-3'. Negatively regulates its own expression. In Arabidopsis thaliana (Mouse-ear cress), this protein is Homeobox-leucine zipper protein HAT4 (HAT4).